The sequence spans 153 residues: Methylglyoxal synthase (153 aa).

Positions 3-153 constitute an MGS-like domain; the sequence is DQVNRPKGVT…SYLSRDVPGN (151 aa). Substrate contacts are provided by residues H19, K23, 45–48, and 65–66; these read TGTT and SG. D71 serves as the catalytic Proton donor/acceptor. A substrate-binding site is contributed by H98.

This sequence belongs to the methylglyoxal synthase family.

It catalyses the reaction dihydroxyacetone phosphate = methylglyoxal + phosphate. Its function is as follows. Catalyzes the formation of methylglyoxal from dihydroxyacetone phosphate. The polypeptide is Methylglyoxal synthase (Hahella chejuensis (strain KCTC 2396)).